The chain runs to 340 residues: MRWARQAVAVNGMPVDDGALPGLQRIGLVRSVRAPQFDGITFHEVLCKSALNKVPNAAALPFRYTVNGYRGCSHACRYCFARPTHEYLDFNPGTDFDTQVVVKTNVAAVLRHELRRPSWRRETVALGTNTDPYQRAEGRYALMPGIIGALAASGTPLSILTKGTLLRRDLPLIAEAAQQVPVSVAVSLAVGDPELHRDVESGTPTPQARLALITAIRAAGLDCHVMVAPVLPQLTDSGEHLDQLLGQIAAAGATGVTVFGLHLRGSTRGWFMCWLARAHPELVSRYRELYRRGPYLPPSYREMLRERVAPLIAKYRLAGDHRPAPPETEAALVPVQATLF.

The 250-residue stretch at 58–307 (AALPFRYTVN…PSYREMLRER (250 aa)) folds into the Radical SAM core domain. Residues Cys-72, Cys-76, and Cys-79 each coordinate [4Fe-4S] cluster. A run of 2 helical transmembrane segments spans residues 140-160 (YALM…LSIL) and 243-263 (QLLG…GLHL).

[4Fe-4S] cluster serves as cofactor.

The protein localises to the cell membrane. This is an uncharacterized protein from Mycobacterium tuberculosis (strain CDC 1551 / Oshkosh).